Reading from the N-terminus, the 122-residue chain is Large ribosomal subunit protein uL14 (122 aa).

Belongs to the universal ribosomal protein uL14 family. Part of the 50S ribosomal subunit. Forms a cluster with proteins L3 and L19. In the 70S ribosome, L14 and L19 interact and together make contacts with the 16S rRNA in bridges B5 and B8.

Its function is as follows. Binds to 23S rRNA. Forms part of two intersubunit bridges in the 70S ribosome. The sequence is that of Large ribosomal subunit protein uL14 from Desulforamulus reducens (strain ATCC BAA-1160 / DSM 100696 / MI-1) (Desulfotomaculum reducens).